The primary structure comprises 179 residues: Large ribosomal subunit protein uL5 (179 aa).

The protein belongs to the universal ribosomal protein uL5 family. Part of the 50S ribosomal subunit; part of the 5S rRNA/L5/L18/L25 subcomplex. Contacts the 5S rRNA and the P site tRNA. Forms a bridge to the 30S subunit in the 70S ribosome.

Functionally, this is one of the proteins that bind and probably mediate the attachment of the 5S RNA into the large ribosomal subunit, where it forms part of the central protuberance. In the 70S ribosome it contacts protein S13 of the 30S subunit (bridge B1b), connecting the 2 subunits; this bridge is implicated in subunit movement. Contacts the P site tRNA; the 5S rRNA and some of its associated proteins might help stabilize positioning of ribosome-bound tRNAs. The sequence is that of Large ribosomal subunit protein uL5 from Photobacterium profundum (strain SS9).